The following is a 301-amino-acid chain: GTPase Era (301 aa).

In terms of domain architecture, Era-type G spans 6–173 (KSGFVAIVGR…LEQTNANLEI (168 aa)). Positions 14 to 21 (GRPNVGKS) are G1. Residue 14 to 21 (GRPNVGKS) coordinates GTP. The G2 stretch occupies residues 40-44 (QTTRN). Residues 61–64 (DTPG) are G3. GTP-binding positions include 61–65 (DTPGI) and 123–126 (NKID). The interval 123–126 (NKID) is G4. Positions 152–154 (ISA) are G5. Residues 204–282 (TREEVPHSVA…FLEVWVKVQK (79 aa)) enclose the KH type-2 domain.

This sequence belongs to the TRAFAC class TrmE-Era-EngA-EngB-Septin-like GTPase superfamily. Era GTPase family. Monomer.

The protein localises to the cytoplasm. The protein resides in the cell membrane. Its function is as follows. An essential GTPase that binds both GDP and GTP, with rapid nucleotide exchange. Plays a role in 16S rRNA processing and 30S ribosomal subunit biogenesis and possibly also in cell cycle regulation and energy metabolism. This Listeria monocytogenes serotype 4a (strain HCC23) protein is GTPase Era.